A 264-amino-acid polypeptide reads, in one-letter code: Phosphonoacetaldehyde hydrolase (264 aa).

The active-site Nucleophile is the Asp9. Asp9 and Ala11 together coordinate Mg(2+). Lys50 (schiff-base intermediate with substrate) is an active-site residue. Position 183 (Asp183) interacts with Mg(2+).

This sequence belongs to the HAD-like hydrolase superfamily. PhnX family. As to quaternary structure, homodimer. Mg(2+) is required as a cofactor.

It carries out the reaction phosphonoacetaldehyde + H2O = acetaldehyde + phosphate + H(+). Functionally, involved in phosphonate degradation. This Bacillus cereus protein is Phosphonoacetaldehyde hydrolase (phnX).